A 174-amino-acid chain; its full sequence is MGKITFFEDRSFQGRCYECSSDCPNLQTYFSRCNSVRVDSGCWMLYERPNYQGHQYFLRRGEYPDYQQWMGFSDSIRSCRLIPHAGSHRMRLYEKEDHKGVMMELSEDCSCIQDRFHLSEVRSLQVLEGCWVLYEMPNYRGRQYLLRPQEYRRFQDWGSVDAKAGSLRRVVDLY.

2 consecutive Beta/gamma crystallin 'Greek key' domains span residues 2–40 (GKIT…RVDS) and 41–83 (GCWM…RLIP). Cysteine 23 carries the post-translational modification S-methylcysteine. The interval 84-87 (HAGS) is connecting peptide. Beta/gamma crystallin 'Greek key' domains are found at residues 88–128 (HRMR…QVLE) and 129–171 (GCWV…RRVV).

Belongs to the beta/gamma-crystallin family.

Crystallins are the dominant structural components of the vertebrate eye lens. The chain is Gamma-crystallin C (Crygc) from Mus musculus (Mouse).